Consider the following 284-residue polypeptide: MSADGRSGRLRFTKMHGAGNDFVVLDLRDGTPPPDAALAAQLADRHFGVGCDQILTIEAPRSEGAVAAYGIWNSDGSAARQCGNGARCVAAWLVRDGIAQCERFIIDSPVTAHAVERLEGGRYAVAMGMPQFDPPQIPLAGFAHARDEYALPVHGDTVRFGAVSMGNPHAVVEVGRVDAAPVERVGTLLQQNAAFPDSVNVGFVQVVDPTHVRLRVFERGVGETLACGSGACAAAVVLMQRCRVERDVQVSLPGGELRIRWPCDHEQVVMSGPAVFVFDGEWNG.

Positions 20, 53, and 73 each coordinate substrate. Residue cysteine 82 is the Proton donor of the active site. Residues glycine 83–asparagine 84, asparagine 167, asparagine 200, and glutamate 218–arginine 219 contribute to the substrate site. Cysteine 227 serves as the catalytic Proton acceptor. Glycine 228–serine 229 contributes to the substrate binding site.

Belongs to the diaminopimelate epimerase family. Homodimer.

Its subcellular location is the cytoplasm. It catalyses the reaction (2S,6S)-2,6-diaminopimelate = meso-2,6-diaminopimelate. The protein operates within amino-acid biosynthesis; L-lysine biosynthesis via DAP pathway; DL-2,6-diaminopimelate from LL-2,6-diaminopimelate: step 1/1. Its function is as follows. Catalyzes the stereoinversion of LL-2,6-diaminopimelate (L,L-DAP) to meso-diaminopimelate (meso-DAP), a precursor of L-lysine and an essential component of the bacterial peptidoglycan. The polypeptide is Diaminopimelate epimerase (Xanthomonas oryzae pv. oryzae (strain MAFF 311018)).